The chain runs to 407 residues: Na(+)-translocating NADH-quinone reductase subunit F (407 aa).

Residues 3 to 23 traverse the membrane as a helical segment; the sequence is IILGVVMFTLIVLALVLVILF. The region spanning 32–126 is the 2Fe-2S ferredoxin-type domain; the sequence is GDITISVNGD…DMDIELPEEI (95 aa). The [2Fe-2S] cluster site is built by Cys69, Cys75, Cys78, and Cys110. The 141-residue stretch at 129 to 269 folds into the FAD-binding FR-type domain; that stretch reads VKKWECTVIS…SGPFGEFFAK (141 aa). Residues 272–389 are catalytic; sequence DAEMVFIGGG…PMMNAAVIGM (118 aa).

This sequence belongs to the NqrF family. Composed of six subunits; NqrA, NqrB, NqrC, NqrD, NqrE and NqrF. The cofactor is [2Fe-2S] cluster. Requires FAD as cofactor.

Its subcellular location is the cell inner membrane. The enzyme catalyses a ubiquinone + n Na(+)(in) + NADH + H(+) = a ubiquinol + n Na(+)(out) + NAD(+). NQR complex catalyzes the reduction of ubiquinone-1 to ubiquinol by two successive reactions, coupled with the transport of Na(+) ions from the cytoplasm to the periplasm. The first step is catalyzed by NqrF, which accepts electrons from NADH and reduces ubiquinone-1 to ubisemiquinone by a one-electron transfer pathway. In Vibrio parahaemolyticus serotype O3:K6 (strain RIMD 2210633), this protein is Na(+)-translocating NADH-quinone reductase subunit F.